The following is a 199-amino-acid chain: V-type ATP synthase subunit E (199 aa).

It belongs to the V-ATPase E subunit family.

In terms of biological role, produces ATP from ADP in the presence of a proton gradient across the membrane. The chain is V-type ATP synthase subunit E from Clostridium botulinum (strain Hall / ATCC 3502 / NCTC 13319 / Type A).